The following is a 417-amino-acid chain: UDP-N-acetylglucosamine 1-carboxyvinyltransferase (417 aa).

22 to 23 (KN) provides a ligand contact to phosphoenolpyruvate. Arg-91 serves as a coordination point for UDP-N-acetyl-alpha-D-glucosamine. Cys-115 functions as the Proton donor in the catalytic mechanism. Cys-115 bears the 2-(S-cysteinyl)pyruvic acid O-phosphothioketal mark. Residues 120–124 (RPVDL), Asp-304, and Ile-326 each bind UDP-N-acetyl-alpha-D-glucosamine.

This sequence belongs to the EPSP synthase family. MurA subfamily.

Its subcellular location is the cytoplasm. It carries out the reaction phosphoenolpyruvate + UDP-N-acetyl-alpha-D-glucosamine = UDP-N-acetyl-3-O-(1-carboxyvinyl)-alpha-D-glucosamine + phosphate. The protein operates within cell wall biogenesis; peptidoglycan biosynthesis. Cell wall formation. Adds enolpyruvyl to UDP-N-acetylglucosamine. This Nitratidesulfovibrio vulgaris (strain DSM 19637 / Miyazaki F) (Desulfovibrio vulgaris) protein is UDP-N-acetylglucosamine 1-carboxyvinyltransferase.